We begin with the raw amino-acid sequence, 61 residues long: Small ribosomal subunit protein uS14 (61 aa).

Residues Cys-24, Cys-27, Cys-40, and Cys-43 each contribute to the Zn(2+) site.

The protein belongs to the universal ribosomal protein uS14 family. Zinc-binding uS14 subfamily. As to quaternary structure, part of the 30S ribosomal subunit. Contacts proteins S3 and S10. The cofactor is Zn(2+).

In terms of biological role, binds 16S rRNA, required for the assembly of 30S particles and may also be responsible for determining the conformation of the 16S rRNA at the A site. In Borreliella burgdorferi (strain ATCC 35210 / DSM 4680 / CIP 102532 / B31) (Borrelia burgdorferi), this protein is Small ribosomal subunit protein uS14.